Consider the following 270-residue polypeptide: Cyclic pyranopterin monophosphate synthase, mitochondrial (270 aa).

The transit peptide at 1–32 directs the protein to the mitochondrion; the sequence is MISTLRRAVFLRRFPAVVSPIKRAFSSRIDDE. Substrate contacts are provided by residues 187–189 and 225–226; these read LCH and ME. The active site involves D240.

Belongs to the MoaC family. Homohexamer. Abundantly expressed in the roots.

The protein localises to the mitochondrion matrix. It carries out the reaction (8S)-3',8-cyclo-7,8-dihydroguanosine 5'-triphosphate = cyclic pyranopterin phosphate + diphosphate. It functions in the pathway cofactor biosynthesis; molybdopterin biosynthesis. Its function is as follows. Catalyzes the conversion of (8S)-3',8-cyclo-7,8-dihydroguanosine 5'-triphosphate to cyclic pyranopterin monophosphate (cPMP). The chain is Cyclic pyranopterin monophosphate synthase, mitochondrial (CNX3) from Arabidopsis thaliana (Mouse-ear cress).